Consider the following 318-residue polypeptide: Mitochondrial thiamine pyrophosphate carrier (318 aa).

Solcar repeat units lie at residues 13 to 106 (NSKL…LTEL), 116 to 202 (HQFS…LKRA), and 214 to 309 (TGNL…FCNL). Helical transmembrane passes span 19–39 (AVAGSVSGFVTRALISPLDVI), 87–107 (ILSIGYGAVQFLAFEELTELL), 122–142 (FVCGGLSAGTATLTVHPVDVL), 173–193 (VFYKGLTPTVIAIFPYAGLQF), 220–240 (LLCGCGSGVISKTLTYPLDLF), and 293–313 (ALSTGFMFFWYELFCNLFHCI).

This sequence belongs to the mitochondrial carrier (TC 2.A.29) family.

The protein localises to the mitochondrion membrane. The catalysed reaction is thiamine phosphate(out) + thiamine diphosphate(in) = thiamine phosphate(in) + thiamine diphosphate(out). Its function is as follows. Mitochondrial transporter mediating uptake of thiamine diphosphate into mitochondria. It is not clear if the antiporter activity is affected by the membrane potential or by the proton electrochemical gradient. The chain is Mitochondrial thiamine pyrophosphate carrier (Slc25a19) from Rattus norvegicus (Rat).